Consider the following 375-residue polypeptide: MAKRDYYEVLGVSRDVDGKEVKKAYRRLAMKYHPDRNPGDASAEEMFKEATEAYDVLSDDQKRAAYDQFGHAGVDGNAGAGGFGGGASFSDIFGDVFGDIFGGGGGGRTRANRGSDLRYTLDLDLEEAVRGTTVKIRVPSQVECKSCSGSGAEKGTQPETCGTCNGAGQVRMQQGFFSIQQTCPRCRGAGKIVRNPCRSCHGSGYVEEQKTLSVKVPAGVDTGDRIRLSGEGEPGVNGGPPGDLYVQVAVREHKIFTRDGRNLYCEVPISFVDAALGGELEVPTLDGRVKLKIPEETQTGRLFRLRGKGVTPVRGGAPGDLLCRVVVETPVNLTKKQKDLLREFQTSMEESGGQQAPKKHSWFEGVKSFFDDMKF.

The region spanning 5–70 (DYYEVLGVSR…QKRAAYDQFG (66 aa)) is the J domain. A CR-type zinc finger spans residues 131-209 (GTTVKIRVPS…CHGSGYVEEQ (79 aa)). Zn(2+) is bound by residues Cys144, Cys147, Cys161, Cys164, Cys183, Cys186, Cys197, and Cys200. 4 CXXCXGXG motif repeats span residues 144 to 151 (CKSCSGSG), 161 to 168 (CGTCNGAG), 183 to 190 (CPRCRGAG), and 197 to 204 (CRSCHGSG).

Belongs to the DnaJ family. As to quaternary structure, homodimer. The cofactor is Zn(2+).

Its subcellular location is the cytoplasm. Participates actively in the response to hyperosmotic and heat shock by preventing the aggregation of stress-denatured proteins and by disaggregating proteins, also in an autonomous, DnaK-independent fashion. Unfolded proteins bind initially to DnaJ; upon interaction with the DnaJ-bound protein, DnaK hydrolyzes its bound ATP, resulting in the formation of a stable complex. GrpE releases ADP from DnaK; ATP binding to DnaK triggers the release of the substrate protein, thus completing the reaction cycle. Several rounds of ATP-dependent interactions between DnaJ, DnaK and GrpE are required for fully efficient folding. Also involved, together with DnaK and GrpE, in the DNA replication of plasmids through activation of initiation proteins. The chain is Chaperone protein DnaJ from Hahella chejuensis (strain KCTC 2396).